The primary structure comprises 181 residues: ATP-dependent protease subunit HslV (181 aa).

T5 is an active-site residue. The Na(+) site is built by S162, C165, and T168.

The protein belongs to the peptidase T1B family. HslV subfamily. A double ring-shaped homohexamer of HslV is capped on each side by a ring-shaped HslU homohexamer. The assembly of the HslU/HslV complex is dependent on binding of ATP.

It localises to the cytoplasm. It catalyses the reaction ATP-dependent cleavage of peptide bonds with broad specificity.. Its activity is regulated as follows. Allosterically activated by HslU binding. Functionally, protease subunit of a proteasome-like degradation complex believed to be a general protein degrading machinery. The protein is ATP-dependent protease subunit HslV of Campylobacter hominis (strain ATCC BAA-381 / DSM 21671 / CCUG 45161 / LMG 19568 / NCTC 13146 / CH001A).